A 235-amino-acid polypeptide reads, in one-letter code: Thrombin-like enzyme bilineobin (235 aa).

Residues 1–227 form the Peptidase S1 domain; it reads IIGGDECNIN…HLDWIQSIIA (227 aa). Intrachain disulfides connect Cys-7-Cys-141, Cys-28-Cys-44, Cys-78-Cys-234, Cys-120-Cys-188, Cys-152-Cys-167, and Cys-178-Cys-203. His-43 serves as the catalytic Charge relay system. Asn-45, Asn-57, and Asn-81 each carry an N-linked (GlcNAc...) asparagine glycan. Residue Asp-88 is the Charge relay system of the active site. Residues Asn-132 and Asn-148 are each glycosylated (N-linked (GlcNAc...) asparagine). Residue Ser-182 is the Charge relay system of the active site. Asn-229 carries N-linked (GlcNAc...) asparagine glycosylation.

Belongs to the peptidase S1 family. Snake venom subfamily. Monomer. Post-translationally, glycosylated. In terms of tissue distribution, expressed by the venom gland.

The protein resides in the secreted. With respect to regulation, not inhibited by hirudin. Its function is as follows. Thrombin-like snake venom serine protease that has coagulant activity by releasing fibrinopeptides A and B from fibrinogen alpha (FGA) and beta (FGB), with a preference for beta chain. The sequence is that of Thrombin-like enzyme bilineobin from Agkistrodon bilineatus (Cantil).